The sequence spans 363 residues: Phosphoribosylformylglycinamidine cyclo-ligase (363 aa).

The protein belongs to the AIR synthase family.

Its subcellular location is the cytoplasm. It carries out the reaction 2-formamido-N(1)-(5-O-phospho-beta-D-ribosyl)acetamidine + ATP = 5-amino-1-(5-phospho-beta-D-ribosyl)imidazole + ADP + phosphate + H(+). The protein operates within purine metabolism; IMP biosynthesis via de novo pathway; 5-amino-1-(5-phospho-D-ribosyl)imidazole from N(2)-formyl-N(1)-(5-phospho-D-ribosyl)glycinamide: step 2/2. In Bartonella tribocorum (strain CIP 105476 / IBS 506), this protein is Phosphoribosylformylglycinamidine cyclo-ligase.